We begin with the raw amino-acid sequence, 355 residues long: UDP-N-acetylglucosamine--N-acetylmuramyl-(pentapeptide) pyrophosphoryl-undecaprenol N-acetylglucosamine transferase (355 aa).

UDP-N-acetyl-alpha-D-glucosamine is bound by residues 14-16 (TGG), N126, R162, S190, I245, 264-269 (ALTVCE), and Q289.

Belongs to the glycosyltransferase 28 family. MurG subfamily.

The protein resides in the cell inner membrane. It catalyses the reaction di-trans,octa-cis-undecaprenyl diphospho-N-acetyl-alpha-D-muramoyl-L-alanyl-D-glutamyl-meso-2,6-diaminopimeloyl-D-alanyl-D-alanine + UDP-N-acetyl-alpha-D-glucosamine = di-trans,octa-cis-undecaprenyl diphospho-[N-acetyl-alpha-D-glucosaminyl-(1-&gt;4)]-N-acetyl-alpha-D-muramoyl-L-alanyl-D-glutamyl-meso-2,6-diaminopimeloyl-D-alanyl-D-alanine + UDP + H(+). Its pathway is cell wall biogenesis; peptidoglycan biosynthesis. Its function is as follows. Cell wall formation. Catalyzes the transfer of a GlcNAc subunit on undecaprenyl-pyrophosphoryl-MurNAc-pentapeptide (lipid intermediate I) to form undecaprenyl-pyrophosphoryl-MurNAc-(pentapeptide)GlcNAc (lipid intermediate II). In Mannheimia succiniciproducens (strain KCTC 0769BP / MBEL55E), this protein is UDP-N-acetylglucosamine--N-acetylmuramyl-(pentapeptide) pyrophosphoryl-undecaprenol N-acetylglucosamine transferase.